The following is a 503-amino-acid chain: Carboxyl-terminal PDZ ligand of neuronal nitric oxide synthase protein (503 aa).

Positions 26-191 (FQHGISFEAK…ESERNSDGSG (166 aa)) constitute a PID domain. Residues 170 to 212 (HTQQNADGQEDGESERNSDGSGDPGRQLTGAERVSTAAAEETD) form a disordered region. A phosphoserine mark is found at Ser183, Ser187, Ser190, and Ser262. Residues 318 to 359 (AAEAAARLEAQARVHQLLLQNKDMLQHISLLVKQVQELELKL) adopt a coiled-coil conformation. Phosphoserine occurs at positions 367, 370, 397, and 413. Residues 491-503 (QELGDSLDDEIAV) form an interaction with NOS1 region. The short motif at 501-503 (IAV) is the PDZ-binding element.

Interacts with the PDZ domain of NOS1 or the second PDZ domain of DLG4 through its C-terminus. Interacts with RASD1 and SYN1, SYN2 and SYN3 via its PID domain. Forms a ternary complex with NOS1 and SYN1. Forms a ternary complex with NOS1 and RASD1.

The protein localises to the cell projection. It is found in the filopodium. The protein resides in the podosome. Adapter protein involved in neuronal nitric-oxide (NO) synthesis regulation via its association with nNOS/NOS1. The complex formed with NOS1 and synapsins is necessary for specific NO and synapsin functions at a presynaptic level. Mediates an indirect interaction between NOS1 and RASD1 leading to enhance the ability of NOS1 to activate RASD1. Competes with DLG4 for interaction with NOS1, possibly affecting NOS1 activity by regulating the interaction between NOS1 and DLG4. In kidney podocytes, plays a role in podosomes and filopodia formation through CDC42 activation. The sequence is that of Carboxyl-terminal PDZ ligand of neuronal nitric oxide synthase protein from Mus musculus (Mouse).